Consider the following 240-residue polypeptide: Ribonuclease PH (240 aa).

Phosphate contacts are provided by residues R87 and 125-127 (GTR).

It belongs to the RNase PH family. Homohexameric ring arranged as a trimer of dimers.

It carries out the reaction tRNA(n+1) + phosphate = tRNA(n) + a ribonucleoside 5'-diphosphate. Phosphorolytic 3'-5' exoribonuclease that plays an important role in tRNA 3'-end maturation. Removes nucleotide residues following the 3'-CCA terminus of tRNAs; can also add nucleotides to the ends of RNA molecules by using nucleoside diphosphates as substrates, but this may not be physiologically important. Probably plays a role in initiation of 16S rRNA degradation (leading to ribosome degradation) during starvation. In Pseudomonas putida (strain GB-1), this protein is Ribonuclease PH.